The primary structure comprises 104 residues: uncharacterized protein (104 aa).

The next 2 helical transmembrane spans lie at 53–73 (IWGI…NWDF) and 74–94 (ILNL…LILI).

Its subcellular location is the cell membrane. This is an uncharacterized protein from Methanocaldococcus jannaschii (strain ATCC 43067 / DSM 2661 / JAL-1 / JCM 10045 / NBRC 100440) (Methanococcus jannaschii).